A 347-amino-acid chain; its full sequence is GMP reductase (347 aa).

Residue 108–131 participates in NADP(+) binding; the sequence is ADFQKTKDVMALSDELIFICIDIA. The K(+) site is built by glycine 181 and glycine 183. Cysteine 186 functions as the Thioimidate intermediate in the catalytic mechanism. Residue 216–239 participates in NADP(+) binding; sequence IIGDGGCTCPGDVAKAFGGGADFV.

Belongs to the IMPDH/GMPR family. GuaC type 1 subfamily. As to quaternary structure, homotetramer.

The catalysed reaction is IMP + NH4(+) + NADP(+) = GMP + NADPH + 2 H(+). In terms of biological role, catalyzes the irreversible NADPH-dependent deamination of GMP to IMP. It functions in the conversion of nucleobase, nucleoside and nucleotide derivatives of G to A nucleotides, and in maintaining the intracellular balance of A and G nucleotides. This chain is GMP reductase, found in Vibrio cholerae serotype O1 (strain ATCC 39541 / Classical Ogawa 395 / O395).